A 151-amino-acid polypeptide reads, in one-letter code: NADH dehydrogenase [ubiquinone] 1 beta subcomplex subunit 11, mitochondrial (151 aa).

A mitochondrion-targeting transit peptide spans 1-29 (MAARLLSLYGRCLSAAGAMRGLPAARVRW). Residues 40 to 62 (GVEKKRQREPTMQWQEDPEPEDE) form a disordered region. Residues 87 to 107 (AVFFFGFSIVLVFGTTFVAYV) form a helical membrane-spanning segment.

This sequence belongs to the complex I NDUFB11 subunit family. In terms of assembly, complex I is composed of 45 different subunits. Interacts with BCAP31.

The protein localises to the mitochondrion inner membrane. Accessory subunit of the mitochondrial membrane respiratory chain NADH dehydrogenase (Complex I), that is believed not to be involved in catalysis. Complex I functions in the transfer of electrons from NADH to the respiratory chain. The immediate electron acceptor for the enzyme is believed to be ubiquinone. The sequence is that of NADH dehydrogenase [ubiquinone] 1 beta subcomplex subunit 11, mitochondrial (Ndufb11) from Mus musculus (Mouse).